The chain runs to 291 residues: Elongation factor Ts (291 aa).

An involved in Mg(2+) ion dislocation from EF-Tu region spans residues 80–83 (TDFV).

The protein belongs to the EF-Ts family.

Its subcellular location is the cytoplasm. Associates with the EF-Tu.GDP complex and induces the exchange of GDP to GTP. It remains bound to the aminoacyl-tRNA.EF-Tu.GTP complex up to the GTP hydrolysis stage on the ribosome. This is Elongation factor Ts from Acinetobacter baumannii (strain AB307-0294).